Reading from the N-terminus, the 195-residue chain is uncharacterized protein (195 aa).

Positions 24–141 (NTDENLKLIF…VFLADKISWD (118 aa)) constitute an HD domain.

This is an uncharacterized protein from Lactococcus lactis subsp. cremoris (Streptococcus cremoris).